We begin with the raw amino-acid sequence, 532 residues long: Vesicular acetylcholine transporter (532 aa).

Residues 1 to 33 lie on the Cytoplasmic side of the membrane; the sequence is MESAEPAGQARAAATKLSEAVGAALQEPRRQRR. A helical membrane pass occupies residues 34–54; it reads LVLVIVCVALLLDNMLYMVIV. Over 55–125 the chain is Lumenal, vesicle; that stretch reads PIVPDYIAHM…PTESEDVKIG (71 aa). 2 N-linked (GlcNAc...) asparagine glycosylation sites follow: Asn89 and Asn96. The chain crosses the membrane as a helical span at residues 126–146; that stretch reads VLFASKAILQLLVNPLSGPFI. The Cytoplasmic segment spans residues 147–152; the sequence is DRMSYD. Residues 153–173 traverse the membrane as a helical segment; the sequence is VPLLIGLGVMFASTVLFAFAE. Residues 174-182 lie on the Lumenal, vesicle side of the membrane; it reads DYATLFAAR. A helical membrane pass occupies residues 183-203; the sequence is SLQGLGSAFADTSGIAMIADK. Topologically, residues 204–213 are cytoplasmic; it reads YPEEPERSRA. A helical membrane pass occupies residues 214–234; sequence LGVALAFISFGSLVAPPFGGI. Residues 235–242 are Lumenal, vesicle-facing; that stretch reads LYEFAGKR. A helical transmembrane segment spans residues 243–263; that stretch reads VPFLVLAAVSLFDALLLLAVA. Over 264 to 289 the chain is Cytoplasmic; it reads KPFSAAARARANLPVGTPIHRLMLDP. Residues 290-310 traverse the membrane as a helical segment; sequence YIAVVAGALTTCNIPLAFLEP. Topologically, residues 311-325 are lumenal, vesicle; that stretch reads TIATWMKHTMAASEW. Residues 326–346 form a helical membrane-spanning segment; the sequence is EMGMAWLPAFVPHVLGVYLTV. Topologically, residues 347-356 are cytoplasmic; the sequence is RLAARYPHLQ. The helical transmembrane segment at 357–377 threads the bilayer; that stretch reads WLYGALGLAVIGASSCIVPAC. Topologically, residues 378–388 are lumenal, vesicle; that stretch reads RSFAPLVVSLC. A helical membrane pass occupies residues 389–409; that stretch reads GLCFGIALVDTALLPTLAFLV. At 410–422 the chain is on the cytoplasmic side; it reads DVRHVSVYGSVYA. The helical transmembrane segment at 423–443 threads the bilayer; that stretch reads IADISYSVAYALGPIVAGHIV. Residues 444–447 are Lumenal, vesicle-facing; the sequence is HSLG. Residues 448–468 form a helical membrane-spanning segment; sequence FEQLSLGMGLANLLYAPVLLL. Residues 469–532 are Cytoplasmic-facing; that stretch reads LRNVGLLTRS…DDYNYYYTRS (64 aa). The mediates interaction with SEC14L1 stretch occupies residues 471–532; the sequence is NVGLLTRSRS…DDYNYYYTRS (62 aa). Residues 502-523 form a disordered region; that stretch reads RPVSGQDGEPRSPPGPFDACED.

Belongs to the major facilitator superfamily. Vesicular transporter family. As to quaternary structure, interacts with SEC14L1. Peripheral and central cholinergic nervous systems.

Its subcellular location is the cytoplasmic vesicle. The protein resides in the secretory vesicle. The protein localises to the synaptic vesicle membrane. The catalysed reaction is acetylcholine(out) + 2 H(+)(in) = acetylcholine(in) + 2 H(+)(out). It catalyses the reaction choline(in) + 2 H(+)(out) = choline(out) + 2 H(+)(in). The enzyme catalyses serotonin(in) + 2 H(+)(out) = serotonin(out) + 2 H(+)(in). Potently inhibited by L-vesamicol, reserpine and tetrabenazine. Functionally, electrogenic antiporter that exchanges one cholinergic neurotransmitter, acetylcholine or choline, with two intravesicular protons across the membrane of synaptic vesicles. Uses the electrochemical proton gradient established by the V-type proton-pump ATPase to store neurotransmitters inside the vesicles prior to their release via exocytosis. Determines cholinergic vesicular quantal size at presynaptic nerve terminals in developing neuro-muscular junctions with an impact on motor neuron differentiation and innervation pattern. Part of forebrain cholinergic system, regulates hippocampal synapse transmissions that underlie spatial memory formation. Can transport serotonin. In Homo sapiens (Human), this protein is Vesicular acetylcholine transporter (SLC18A3).